A 300-amino-acid polypeptide reads, in one-letter code: Acetylglutamate kinase (300 aa).

Substrate is bound by residues 73 to 74 (GG), Arg95, and Asn197.

Belongs to the acetylglutamate kinase family. ArgB subfamily.

Its subcellular location is the cytoplasm. It catalyses the reaction N-acetyl-L-glutamate + ATP = N-acetyl-L-glutamyl 5-phosphate + ADP. The protein operates within amino-acid biosynthesis; L-arginine biosynthesis; N(2)-acetyl-L-ornithine from L-glutamate: step 2/4. In terms of biological role, catalyzes the ATP-dependent phosphorylation of N-acetyl-L-glutamate. This chain is Acetylglutamate kinase, found in Bordetella pertussis (strain Tohama I / ATCC BAA-589 / NCTC 13251).